The chain runs to 312 residues: tRNA uridine(34) hydroxylase (312 aa).

The Rhodanese domain maps to Arg-130–Leu-225. The active-site Cysteine persulfide intermediate is Cys-185.

This sequence belongs to the TrhO family.

It catalyses the reaction uridine(34) in tRNA + AH2 + O2 = 5-hydroxyuridine(34) in tRNA + A + H2O. Its function is as follows. Catalyzes oxygen-dependent 5-hydroxyuridine (ho5U) modification at position 34 in tRNAs. This Corynebacterium glutamicum (strain ATCC 13032 / DSM 20300 / JCM 1318 / BCRC 11384 / CCUG 27702 / LMG 3730 / NBRC 12168 / NCIMB 10025 / NRRL B-2784 / 534) protein is tRNA uridine(34) hydroxylase.